A 101-amino-acid chain; its full sequence is Large ribosomal subunit protein uL24 (101 aa).

The protein belongs to the universal ribosomal protein uL24 family. As to quaternary structure, part of the 50S ribosomal subunit.

Its function is as follows. One of two assembly initiator proteins, it binds directly to the 5'-end of the 23S rRNA, where it nucleates assembly of the 50S subunit. In terms of biological role, one of the proteins that surrounds the polypeptide exit tunnel on the outside of the subunit. In Streptococcus pneumoniae (strain ATCC 700669 / Spain 23F-1), this protein is Large ribosomal subunit protein uL24.